Here is a 232-residue protein sequence, read N- to C-terminus: Ashwin (232 aa).

2 stretches are compositionally biased toward basic and acidic residues: residues 64–97 and 116–127; these read DLPK…DGLR and KKTENGDNDRLR. Residues 64-232 form a disordered region; the sequence is DLPKSRWGKM…KRKIQHVTWP (169 aa). Positions 130-140 are enriched in polar residues; sequence PQASATSNTFR. Serine 143 bears the Phosphoserine mark. Over residues 144 to 156 the composition is skewed to low complexity; sequence DSSSSVSPLVLSS. Residues 163–179 show a composition bias toward basic and acidic residues; it reads KMEHGNNDNKQNHDLTH. Phosphoserine is present on residues serine 182, serine 189, and serine 193. Threonine 198 is modified (phosphothreonine).

Belongs to the ashwin family. Component of the tRNA-splicing ligase complex.

It is found in the nucleus. This chain is Ashwin, found in Bos taurus (Bovine).